The primary structure comprises 270 residues: MNCFQEKQFLRENLLKMPFRMVLTGGSGSGKTIYLLSLFSTLVKKYKHIFLFTPVYNPDYDGYIWPNHINFVSSQESLEYNLIRTKSNIEKCITVAQNHKKSAHFLLIFDDVGDKLSKCNTLIEFLNFGRHLNTSIILLCQTYRHVPILGRANITHFCSFNISISDAENMLRSMPVKGKRKDILNMLNMIQTVRSNNRLAIIIEDSVFCEGELRICTDTADKDVIEQKLNIDILVNQYSHMKKNLNTILESTKTKLCNSDQSSSSKNVSS.

Glycine 25–threonine 32 is a binding site for ATP.

The protein belongs to the orthopoxvirus OPG160 protein family. Interacts with protein OPG137.

Its function is as follows. Participates in viral DNA packaging and virion morphogenesis. In Variola virus (isolate Human/India/Ind3/1967) (VARV), this protein is DNA packaging protein OPG160 (OPG160).